The primary structure comprises 248 residues: 2,3-bisphosphoglycerate-dependent phosphoglycerate mutase (248 aa).

Substrate contacts are provided by residues 8 to 15 (RHGESTWN), 21 to 22 (TG), arginine 60, 87 to 90 (ERHY), lysine 98, 114 to 115 (RR), and 183 to 184 (GN). The active-site Tele-phosphohistidine intermediate is the histidine 9. The active-site Proton donor/acceptor is glutamate 87.

The protein belongs to the phosphoglycerate mutase family. BPG-dependent PGAM subfamily. As to quaternary structure, homodimer.

The enzyme catalyses (2R)-2-phosphoglycerate = (2R)-3-phosphoglycerate. The protein operates within carbohydrate degradation; glycolysis; pyruvate from D-glyceraldehyde 3-phosphate: step 3/5. In terms of biological role, catalyzes the interconversion of 2-phosphoglycerate and 3-phosphoglycerate. The chain is 2,3-bisphosphoglycerate-dependent phosphoglycerate mutase from Burkholderia lata (strain ATCC 17760 / DSM 23089 / LMG 22485 / NCIMB 9086 / R18194 / 383).